The following is a 316-amino-acid chain: Acetaldehyde dehydrogenase (316 aa).

11-14 (SGNI) serves as a coordination point for NAD(+). Cysteine 131 (acyl-thioester intermediate) is an active-site residue. Residues 162–170 (SAGPGTRAN) and asparagine 289 contribute to the NAD(+) site.

This sequence belongs to the acetaldehyde dehydrogenase family. Interacts with MhpE.

The enzyme catalyses acetaldehyde + NAD(+) + CoA = acetyl-CoA + NADH + H(+). It participates in aromatic compound metabolism; 3-phenylpropanoate degradation. Functionally, catalyzes the conversion of acetaldehyde to acetyl-CoA, using NAD(+) and coenzyme A. Is the final enzyme in the meta-cleavage pathway for the degradation of aromatic compounds. This Escherichia coli O7:K1 (strain IAI39 / ExPEC) protein is Acetaldehyde dehydrogenase.